The sequence spans 203 residues: Probable flagellin 1 (203 aa).

Residues 1–11 (MGMRFLKNEKG) constitute a propeptide that is removed on maturation.

The protein belongs to the archaeal flagellin family.

It is found in the archaeal flagellum. Functionally, flagellin is the subunit protein which polymerizes to form the filaments of archaeal flagella. The chain is Probable flagellin 1 (flaB1) from Archaeoglobus fulgidus (strain ATCC 49558 / DSM 4304 / JCM 9628 / NBRC 100126 / VC-16).